A 687-amino-acid polypeptide reads, in one-letter code: Glycine--tRNA ligase beta subunit (687 aa).

It belongs to the class-II aminoacyl-tRNA synthetase family. Tetramer of two alpha and two beta subunits.

The protein resides in the cytoplasm. The catalysed reaction is tRNA(Gly) + glycine + ATP = glycyl-tRNA(Gly) + AMP + diphosphate. This is Glycine--tRNA ligase beta subunit from Neisseria meningitidis serogroup C / serotype 2a (strain ATCC 700532 / DSM 15464 / FAM18).